Here is a 165-residue protein sequence, read N- to C-terminus: MKTMKKYIKTAFFCSMYWLIVQLNIANLGTRIPDKYFRQKHIIFKSFNFEKHGKFWNKWFYVRKWKHKILDGHQLNRNIYDQRHLMTINSDEIEKMIIETKRAELIHWISILPVIIFNKGPRLVKYINIFYAMIANVPIIIVQRYNRPRLTQLLRILKRRGERHD.

Positions 1-28 are cleaved as a signal peptide; the sequence is MKTMKKYIKTAFFCSMYWLIVQLNIANL. Residues 126–145 form a helical membrane-spanning segment; it reads YINIFYAMIANVPIIIVQRY.

Belongs to the acyltransferase CrtO family.

Its subcellular location is the cell membrane. The protein operates within carotenoid biosynthesis; staphyloxanthin biosynthesis; staphyloxanthin from farnesyl diphosphate: step 5/5. Functionally, catalyzes the acylation of glycosyl-4,4'-diaponeurosporenoate, i.e. the esterification of glucose at the C6'' position with the carboxyl group of the C(15) fatty acid 12-methyltetradecanoic acid, to yield staphyloxanthin. This is the last step in the biosynthesis of this orange pigment, present in most staphylococci strains. This chain is Glycosyl-4,4'-diaponeurosporenoate acyltransferase (crtO), found in Staphylococcus aureus (strain bovine RF122 / ET3-1).